A 352-amino-acid chain; its full sequence is Glycerol-1-phosphate dehydrogenase [NAD(P)+] (352 aa).

Residues 98-102 and 120-123 contribute to the NAD(+) site; these read GKAID and TAAS. Residue aspartate 125 coordinates substrate. Serine 129 contributes to the NAD(+) binding site. Aspartate 172 is a binding site for substrate. The Zn(2+) site is built by aspartate 172 and histidine 252. Histidine 256 is a binding site for substrate. Histidine 268 lines the Zn(2+) pocket.

This sequence belongs to the glycerol-1-phosphate dehydrogenase family. The cofactor is Zn(2+).

The protein resides in the cytoplasm. The enzyme catalyses sn-glycerol 1-phosphate + NAD(+) = dihydroxyacetone phosphate + NADH + H(+). It carries out the reaction sn-glycerol 1-phosphate + NADP(+) = dihydroxyacetone phosphate + NADPH + H(+). The protein operates within membrane lipid metabolism; glycerophospholipid metabolism. Catalyzes the NAD(P)H-dependent reduction of dihydroxyacetonephosphate (DHAP or glycerone phosphate) to glycerol 1-phosphate (G1P). The G1P thus generated is used as the glycerophosphate backbone of phospholipids in the cellular membranes of Archaea. This chain is Glycerol-1-phosphate dehydrogenase [NAD(P)+], found in Haloarcula marismortui (strain ATCC 43049 / DSM 3752 / JCM 8966 / VKM B-1809) (Halobacterium marismortui).